The sequence spans 81 residues: MGQSSSSGRGGICGLCKRYNELVTCNGETVALNSEFFEDFDFDENVTEDADKSTQRRPRVIDVTPKRKPSGKSSHSKCAKC.

A lipid anchor (N-myristoyl glycine; by host) is attached at glycine 2. The Di-leucine-like internalization motif motif lies at 22–23 (LV). Residues 41 to 47 (DFDENVT) are asp/Glu-rich (acidic). The disordered stretch occupies residues 47 to 81 (TEDADKSTQRRPRVIDVTPKRKPSGKSSHSKCAKC). Residues 66–81 (KRKPSGKSSHSKCAKC) are compositionally biased toward basic residues.

The protein belongs to the herpesviridae cytoplasmic envelopment protein 3 family. In terms of assembly, interacts with cytoplasmic envelopment protein 2; this interaction is essential for the proper localization of each protein to the assembly complex and thus for the production of infectious virus. Post-translationally, myristoylation and palmitoylation (probably on one or more of the nearby cysteines at the N-terminus) enable membrane-binding and Golgi apparatus-specific targeting and are essential for efficient packaging. Phosphorylated. Phosphorylation does not seem to be required for recycling to the host Golgi apparatus. Packaging is selective for underphosphorylated forms.

Its subcellular location is the virion tegument. It is found in the virion membrane. The protein resides in the host cell membrane. It localises to the host Golgi apparatus membrane. Functionally, plays an important role in the cytoplasmic envelopment of tegument proteins and capsids during the assembly and egress processes. Also participates in viral entry at the fusion step probably by regulating the core fusion machinery. The protein is Cytoplasmic envelopment protein 3 of Homo sapiens (Human).